Consider the following 397-residue polypeptide: NADH-quinone oxidoreductase subunit H 1 (397 aa).

Transmembrane regions (helical) follow at residues 7–27, 84–104, 120–140, 156–176, 198–218, 258–278, 279–299, 313–333, 337–357, and 376–396; these read FIFISLVKAAVIFGVLMTTLA, PFLAITMALLSISVIPFGPVI, IGVLFILAVSSMGVYGIALAG, SAQMISYELPMSLAIAAPLLI, LLSGPFPQVISFIIFIIAAFA, MITVSAMATLLFLGGWMAPWP, AAYGSSLVPSILFGISGLVLL, TFPAFGIIFLGIAGIFLLPMV, LLPLFWFCAKTGAILFAFMWI, and FLFPVAMLNLLVTGFLVAWTT.

It belongs to the complex I subunit 1 family. As to quaternary structure, NDH-1 is composed of 14 different subunits. Subunits NuoA, H, J, K, L, M, N constitute the membrane sector of the complex.

The protein localises to the cell inner membrane. The enzyme catalyses a quinone + NADH + 5 H(+)(in) = a quinol + NAD(+) + 4 H(+)(out). NDH-1 shuttles electrons from NADH, via FMN and iron-sulfur (Fe-S) centers, to quinones in the respiratory chain. The immediate electron acceptor for the enzyme in this species is believed to be ubiquinone. Couples the redox reaction to proton translocation (for every two electrons transferred, four hydrogen ions are translocated across the cytoplasmic membrane), and thus conserves the redox energy in a proton gradient. This subunit may bind ubiquinone. This is NADH-quinone oxidoreductase subunit H 1 from Solibacter usitatus (strain Ellin6076).